Here is a 104-residue protein sequence, read N- to C-terminus: V-type ATP synthase subunit F (104 aa).

The protein belongs to the V-ATPase F subunit family.

Functionally, produces ATP from ADP in the presence of a proton gradient across the membrane. This chain is V-type ATP synthase subunit F (atpF), found in Thermus thermophilus (strain ATCC 27634 / DSM 579 / HB8).